The sequence spans 369 residues: Septin-5 (369 aa).

T13 bears the Phosphothreonine mark. The Septin-type G domain occupies 41–314; sequence KGFDFTLMVA…ENYRAHCIQQ (274 aa). Residues 51-58 are G1 motif; it reads GESGLGKS. GTP contacts are provided by residues 51–58, T85, and G111; that span reads GESGLGKS. The interval 108–111 is G3 motif; it reads DTPG. The residue at position 168 (R168) is an Omega-N-methylarginine. A G4 motif region spans residues 189–192; that stretch reads AKAD. 190 to 198 provides a ligand contact to GTP; sequence KADCLVPSE. S225 carries the phosphoserine modification. 2 residues coordinate GTP: G248 and R263. A Phosphoserine modification is found at S327. T336 carries the post-translational modification Phosphothreonine. A coiled-coil region spans residues 338–369; the sequence is DSETEKLIRMKDEELRRMQEMLQKMKQRMQDQ.

This sequence belongs to the TRAFAC class TrmE-Era-EngA-EngB-Septin-like GTPase superfamily. Septin GTPase family. Septins polymerize into heterooligomeric protein complexes that form filaments, and can associate with cellular membranes, actin filaments and microtubules. GTPase activity is required for filament formation. Interacts with SEPTIN2 and SEPTIN5. In platelets, associated with a complex containing STX4. Interacts with PRKN; this interaction leads to SEPTIN5 ubiquitination and degradation. Interacts with DYRK1A. Interacts with STX1A; in the cerebellar cortex. Post-translationally, phosphorylated by DYRK1A. As to expression, expressed in brain and testis and at lower level in heart, spleen, lung and kidney.

It localises to the cytoplasm. It is found in the cytoskeleton. Filament-forming cytoskeletal GTPase. May play a role in cytokinesis (Potential). May play a role in platelet secretion. The sequence is that of Septin-5 from Rattus norvegicus (Rat).